Reading from the N-terminus, the 167-residue chain is DNA-directed RNA polymerase 19 kDa subunit (167 aa).

The segment at 15–41 is disordered; it reads DNDYKSYDEDDDSISDIGETSDDCCTT. A compositionally biased stretch (acidic residues) spans 22 to 36; sequence DEDDDSISDIGETSD.

The protein belongs to the poxviridae DNA-directed RNA polymerase 19 kDa subunit family. As to quaternary structure, the DNA-dependent RNA polymerase used for intermediate and late genes expression consists of eight subunits (147) kDa, 133 kDa, 35 kDa, 30 kDa, 22 kDa, 19 kDa, 18 kDa and 7 kDa totalling more than 500 kDa in mass. The same holoenzyme, with the addition of the transcription-specificity factor RAP94, is used for early gene expression.

The protein localises to the virion. The enzyme catalyses RNA(n) + a ribonucleoside 5'-triphosphate = RNA(n+1) + diphosphate. Its function is as follows. Part of the DNA-dependent RNA polymerase which catalyzes the transcription of viral DNA into RNA using the four ribonucleoside triphosphates as substrates. Responsible for the transcription of early, intermediate and late genes. DNA-dependent RNA polymerase associates with the early transcription factor (ETF) thereby allowing the early genes transcription. Late transcription, and probably also intermediate transcription, require newly synthesized RNA polymerase. The sequence is that of DNA-directed RNA polymerase 19 kDa subunit (RPO19) from Vertebrata (FPV).